We begin with the raw amino-acid sequence, 312 residues long: MNNFYIKCLKSKKVESGSIYGQFVIKSLHPGQGITIGNLFRRVLLSDLGGTAITGVRIAGVRDEFSTIPGIREDILEILLNLKGIVLKSKTNDLKFGRLKIKGPAVVTANCIQLPSEVEIVNPNHYIATITTSNVLEIEFKIESGTGYKLAGQTFCKKSQDYLQIDAIFMPVQKVDFKIENIYDNSNDLTERLFLDIWTNGSMSPEEAVSSASRFIISFFSSLLENKLPQETKESENKTLSAPKNPHTNIAIEELHLSVRAYNCLKRAQINTIGDLLKYSPEKLQELKNFGRKSADEVFTTLKNKLGIVLSN.

Residues 1 to 227 are alpha N-terminal domain (alpha-NTD); it reads MNNFYIKCLK…SFFSSLLENK (227 aa). An alpha C-terminal domain (alpha-CTD) region spans residues 243–312; the sequence is PKNPHTNIAI…KNKLGIVLSN (70 aa).

The protein belongs to the RNA polymerase alpha chain family. As to quaternary structure, in plastids the minimal PEP RNA polymerase catalytic core is composed of four subunits: alpha, beta, beta', and beta''. When a (nuclear-encoded) sigma factor is associated with the core the holoenzyme is formed, which can initiate transcription.

The protein resides in the plastid. It is found in the chloroplast. The enzyme catalyses RNA(n) + a ribonucleoside 5'-triphosphate = RNA(n+1) + diphosphate. Its function is as follows. DNA-dependent RNA polymerase catalyzes the transcription of DNA into RNA using the four ribonucleoside triphosphates as substrates. The chain is DNA-directed RNA polymerase subunit alpha from Trieres chinensis (Marine centric diatom).